The following is a 449-amino-acid chain: Phosphoglucosamine mutase (449 aa).

Residue serine 100 is the Phosphoserine intermediate of the active site. Mg(2+) is bound by residues serine 100, aspartate 241, aspartate 243, and aspartate 245. A Phosphoserine modification is found at serine 100.

This sequence belongs to the phosphohexose mutase family. Mg(2+) is required as a cofactor. In terms of processing, activated by phosphorylation.

It carries out the reaction alpha-D-glucosamine 1-phosphate = D-glucosamine 6-phosphate. Its function is as follows. Catalyzes the conversion of glucosamine-6-phosphate to glucosamine-1-phosphate. This Clostridium botulinum (strain Kyoto / Type A2) protein is Phosphoglucosamine mutase.